We begin with the raw amino-acid sequence, 29 residues long: GWTLNSAGYLLGPHAIDNHRSFNEKHGIA.

Residue alanine 29 is modified to Alanine amide.

This sequence belongs to the galanin family.

The protein localises to the secreted. In terms of biological role, contracts smooth muscle of the gastrointestinal and genitourinary tract, regulates growth hormone release, modulates insulin release, and may be involved in the control of adrenal secretion. This is Galanin (GAL) from Alligator mississippiensis (American alligator).